The following is a 146-amino-acid chain: Mitochondrial DnaJ homolog 2 (146 aa).

One can recognise a J domain in the interval 85 to 146 (EALLILDISA…LERSVLLRKR (62 aa)).

As to quaternary structure, interacts with PAM16/TIM16 and is recruited by the PAM complex.

The protein resides in the mitochondrion inner membrane. In terms of biological role, plays a role in mitochondrial biogenesis and protein folding. Participates in the translocation of transit peptide-containing proteins from the inner membrane into the mitochondrial matrix in an ATP-dependent manner, probably by stimulating activity of mtHSP70 (SSC1). This is Mitochondrial DnaJ homolog 2 (MDJ2) from Saccharomyces cerevisiae (strain ATCC 204508 / S288c) (Baker's yeast).